Reading from the N-terminus, the 401-residue chain is Deacetoxyvindoline 4-hydroxylase (401 aa).

The Fe2OG dioxygenase domain maps to 242 to 345 (CAEGLILLGH…SVAVAFGIKT (104 aa)). Fe cation-binding residues include His268, Asp270, and His324. Arg334 provides a ligand contact to 2-oxoglutarate.

It belongs to the iron/ascorbate-dependent oxidoreductase family. In terms of assembly, monomer. The cofactor is Fe cation. Requires L-ascorbate as cofactor. In terms of tissue distribution, highest levels in leaves, lower levels in stems and fruits. Not expressed in flowers and roots.

The protein localises to the cytoplasm. It is found in the nucleus. The catalysed reaction is deacetoxyvindoline + 2-oxoglutarate + O2 = 4-O-deacetylvindoline + succinate + CO2. Its pathway is alkaloid biosynthesis; vindoline biosynthesis. Its function is as follows. Catalyzes the C4-hydroxylation of desacetoxyvindoline. In Catharanthus roseus (Madagascar periwinkle), this protein is Deacetoxyvindoline 4-hydroxylase.